The following is a 129-amino-acid chain: SOSS complex subunit C homolog (129 aa).

The disordered stretch occupies residues R105–K129.

Belongs to the SOSS-C family.

This is SOSS complex subunit C homolog from Drosophila erecta (Fruit fly).